A 785-amino-acid chain; its full sequence is Cadherin-7 (785 aa).

The N-terminal stretch at 1 to 27 (MKLGKVEFCHLLQIIALFLCLSGMNQA) is a signal peptide. The propeptide occupies 28-47 (EPSRSRSKPYFQSGRTRTKR). The Extracellular segment spans residues 48–607 (SWVWNQFFVL…AYILPAGLST (560 aa)). 5 Cadherin domains span residues 49-153 (WVWN…EPKF), 154-262 (LDGP…PPRF), 263-377 (PRRS…PPVF), 378-482 (TSRL…APEF), and 482-599 (FAME…AEAY). N-linked (GlcNAc...) asparagine glycans are attached at residues Asn-449 and Asn-530. A helical transmembrane segment spans residues 608-628 (GALIAILACVLTLLVLVLLIV). Topologically, residues 629–785 (TMRRRKKEPL…YGSGPDCLYS (157 aa)) are cytoplasmic.

The protein resides in the cell membrane. In terms of biological role, cadherins are calcium-dependent cell adhesion proteins. They preferentially interact with themselves in a homophilic manner in connecting cells; cadherins may thus contribute to the sorting of heterogeneous cell types. This Gallus gallus (Chicken) protein is Cadherin-7 (CDH7).